The primary structure comprises 285 residues: Diphthine methyl ester synthase (285 aa).

S-adenosyl-L-methionine contacts are provided by residues Leu9, Asp84, Gly87, 112–113 (SI), Leu163, Val221, and His246.

The protein belongs to the diphthine synthase family.

The protein resides in the cytoplasm. It catalyses the reaction 2-[(3S)-amino-3-carboxypropyl]-L-histidyl-[translation elongation factor 2] + 4 S-adenosyl-L-methionine = diphthine methyl ester-[translation elongation factor 2] + 4 S-adenosyl-L-homocysteine + 3 H(+). It participates in protein modification; peptidyl-diphthamide biosynthesis. Its function is as follows. S-adenosyl-L-methionine-dependent methyltransferase that catalyzes four methylations of the modified target histidine residue in translation elongation factor 2 (EF-2), to form an intermediate called diphthine methyl ester. The four successive methylation reactions represent the second step of diphthamide biosynthesis. This chain is Diphthine methyl ester synthase (dph5), found in Emericella nidulans (strain FGSC A4 / ATCC 38163 / CBS 112.46 / NRRL 194 / M139) (Aspergillus nidulans).